A 344-amino-acid chain; its full sequence is Protein RecA (344 aa).

Position 65–72 (65–72 (GPESSGKT)) interacts with ATP.

It belongs to the RecA family.

The protein localises to the cytoplasm. Functionally, can catalyze the hydrolysis of ATP in the presence of single-stranded DNA, the ATP-dependent uptake of single-stranded DNA by duplex DNA, and the ATP-dependent hybridization of homologous single-stranded DNAs. It interacts with LexA causing its activation and leading to its autocatalytic cleavage. The chain is Protein RecA from Rubrobacter xylanophilus (strain DSM 9941 / JCM 11954 / NBRC 16129 / PRD-1).